Consider the following 370-residue polypeptide: Metalloproteinase (370 aa).

The N-terminal stretch at 1–15 is a signal peptide; sequence MYLAYIFFLFATVSA. Residues 170–370 enclose the Peptidase M12B domain; it reads IVIEVLLVTD…DNYGKIFRMF (201 aa). N-linked (GalNAc...) asparagine glycosylation occurs at Asn226. His320 provides a ligand contact to Zn(2+). The active site involves Glu321. The Zn(2+) site is built by His324 and His330.

Belongs to the venom metalloproteinase (M12B) family. As to expression, expressed by the venom gland.

The protein localises to the secreted. In terms of biological role, metalloprotease that may disrupt the cell matrix and the process of clotting blood or hemolymph. This is Metalloproteinase from Tityus obscurus (Amazonian scorpion).